The following is a 110-amino-acid chain: UPF0145 protein (110 aa).

The protein belongs to the UPF0145 family.

In Listeria welshimeri, this protein is UPF0145 protein.